The primary structure comprises 259 residues: Type III pantothenate kinase (259 aa).

6 to 13 (DVGNTNCT) lines the ATP pocket. 107-110 (GSDR) serves as a coordination point for substrate. Catalysis depends on D109, which acts as the Proton acceptor. D129 provides a ligand contact to K(+). T132 contacts ATP. Substrate is bound at residue T184.

The protein belongs to the type III pantothenate kinase family. As to quaternary structure, homodimer. NH4(+) is required as a cofactor. K(+) serves as cofactor.

It is found in the cytoplasm. The catalysed reaction is (R)-pantothenate + ATP = (R)-4'-phosphopantothenate + ADP + H(+). The protein operates within cofactor biosynthesis; coenzyme A biosynthesis; CoA from (R)-pantothenate: step 1/5. Catalyzes the phosphorylation of pantothenate (Pan), the first step in CoA biosynthesis. In Listeria monocytogenes serovar 1/2a (strain ATCC BAA-679 / EGD-e), this protein is Type III pantothenate kinase.